The sequence spans 91 residues: Small ribosomal subunit protein uS19c (91 aa).

The protein belongs to the universal ribosomal protein uS19 family.

The protein localises to the plastid. The protein resides in the organellar chromatophore. Functionally, protein S19 forms a complex with S13 that binds strongly to the 16S ribosomal RNA. The protein is Small ribosomal subunit protein uS19c of Paulinella chromatophora.